A 264-amino-acid chain; its full sequence is Phosphatidylglycerol--prolipoprotein diacylglyceryl transferase (264 aa).

4 helical membrane passes run 17–37, 57–77, 89–109, and 118–138; these read LAIH…YLLG, LIFY…VLFY, IAFL…VILV, and GVSF…GLGA. Residue Arg-140 coordinates a 1,2-diacyl-sn-glycero-3-phospho-(1'-sn-glycerol). 3 helical membrane passes run 173-193, 201-221, and 237-257; these read PSQL…LWWF, GQVS…VEFT, and MGQW…VLTA.

Belongs to the Lgt family.

It is found in the cell inner membrane. It carries out the reaction L-cysteinyl-[prolipoprotein] + a 1,2-diacyl-sn-glycero-3-phospho-(1'-sn-glycerol) = an S-1,2-diacyl-sn-glyceryl-L-cysteinyl-[prolipoprotein] + sn-glycerol 1-phosphate + H(+). It functions in the pathway protein modification; lipoprotein biosynthesis (diacylglyceryl transfer). In terms of biological role, catalyzes the transfer of the diacylglyceryl group from phosphatidylglycerol to the sulfhydryl group of the N-terminal cysteine of a prolipoprotein, the first step in the formation of mature lipoproteins. This is Phosphatidylglycerol--prolipoprotein diacylglyceryl transferase from Bordetella avium (strain 197N).